The chain runs to 236 residues: Orotidine 5'-phosphate decarboxylase (236 aa).

Residues Asp14, Lys36, 63–72 (DLKFHDIPNT), Thr123, Arg184, Gln193, Gly213, and Arg214 contribute to the substrate site. Lys65 serves as the catalytic Proton donor.

This sequence belongs to the OMP decarboxylase family. Type 1 subfamily. In terms of assembly, homodimer.

It catalyses the reaction orotidine 5'-phosphate + H(+) = UMP + CO2. Its pathway is pyrimidine metabolism; UMP biosynthesis via de novo pathway; UMP from orotate: step 2/2. Functionally, catalyzes the decarboxylation of orotidine 5'-monophosphate (OMP) to uridine 5'-monophosphate (UMP). The protein is Orotidine 5'-phosphate decarboxylase of Marinobacter nauticus (strain ATCC 700491 / DSM 11845 / VT8) (Marinobacter aquaeolei).